The sequence spans 282 residues: ATP synthase gamma chain (282 aa).

This sequence belongs to the ATPase gamma chain family. In terms of assembly, F-type ATPases have 2 components, CF(1) - the catalytic core - and CF(0) - the membrane proton channel. CF(1) has five subunits: alpha(3), beta(3), gamma(1), delta(1), epsilon(1). CF(0) has three main subunits: a, b and c.

It is found in the cell membrane. In terms of biological role, produces ATP from ADP in the presence of a proton gradient across the membrane. The gamma chain is believed to be important in regulating ATPase activity and the flow of protons through the CF(0) complex. The protein is ATP synthase gamma chain of Clostridium botulinum (strain 657 / Type Ba4).